Here is a 294-residue protein sequence, read N- to C-terminus: Probable metallo-hydrolase BURPS1710b_2304 (294 aa).

The a divalent metal cation site is built by His-68, His-70, Asp-72, His-73, His-143, Asp-170, and His-212.

The protein belongs to the metallo-beta-lactamase superfamily. It depends on a divalent metal cation as a cofactor.

In terms of biological role, probable hydrolase. Does not have beta-lactamase activity. This is Probable metallo-hydrolase BURPS1710b_2304 from Burkholderia pseudomallei (strain 1710b).